A 595-amino-acid chain; its full sequence is Fructan 1-exohydrolase (595 aa).

Positions 1–20 (MAQAWAFLLPLLVLGSYVTS) are cleaved as a signal peptide. D74 is an active-site residue. Residues N167, N235, and N247 are each glycosylated (N-linked (GlcNAc...) asparagine). The cysteines at positions 445 and 491 are disulfide-linked. N-linked (GlcNAc...) asparagine glycosylation is present at N566.

This sequence belongs to the glycosyl hydrolase 32 family.

The enzyme catalyses Hydrolysis of terminal, non-reducing (2-&gt;1)-linked beta-D-fructofuranose residues in fructans.. Its activity is regulated as follows. Inhibited by sucrose. In terms of biological role, hydrolyzes inulin-type beta-(2,1)-fructans. May play a role as a beta-(2,1)-trimmer during graminan biosynthesis. The protein is Fructan 1-exohydrolase of Aegilops speltoides (Goatgrass).